The following is a 697-amino-acid chain: Ribosomal RNA large subunit methyltransferase K/L (697 aa).

In terms of domain architecture, THUMP spans 43 to 154 (ILYNSLMWSR…QNLVHIMLDL (112 aa)).

Belongs to the methyltransferase superfamily. RlmKL family.

It localises to the cytoplasm. It catalyses the reaction guanosine(2445) in 23S rRNA + S-adenosyl-L-methionine = N(2)-methylguanosine(2445) in 23S rRNA + S-adenosyl-L-homocysteine + H(+). The catalysed reaction is guanosine(2069) in 23S rRNA + S-adenosyl-L-methionine = N(2)-methylguanosine(2069) in 23S rRNA + S-adenosyl-L-homocysteine + H(+). In terms of biological role, specifically methylates the guanine in position 2445 (m2G2445) and the guanine in position 2069 (m7G2069) of 23S rRNA. The protein is Ribosomal RNA large subunit methyltransferase K/L of Buchnera aphidicola subsp. Schizaphis graminum (strain Sg).